The primary structure comprises 85 residues: Large ribosomal subunit protein bL27 (85 aa).

Residues 1–22 form a disordered region; it reads MAKTKAGGSTRNGRDSKGRRLG.

It belongs to the bacterial ribosomal protein bL27 family.

The protein is Large ribosomal subunit protein bL27 of Mycoplasmopsis pulmonis (strain UAB CTIP) (Mycoplasma pulmonis).